The chain runs to 175 residues: Small ribosomal subunit protein uS5 (175 aa).

One can recognise an S5 DRBM domain in the interval 11 to 74 (LSEVLVDVNR…QAAKKRMMKV (64 aa)).

It belongs to the universal ribosomal protein uS5 family. In terms of assembly, part of the 30S ribosomal subunit. Contacts proteins S4 and S8.

In terms of biological role, with S4 and S12 plays an important role in translational accuracy. Functionally, located at the back of the 30S subunit body where it stabilizes the conformation of the head with respect to the body. This Rickettsia prowazekii (strain Madrid E) protein is Small ribosomal subunit protein uS5.